The following is a 424-amino-acid chain: Enolase (424 aa).

Residue Gln163 coordinates (2R)-2-phosphoglycerate. Glu205 acts as the Proton donor in catalysis. The Mg(2+) site is built by Asp242, Glu285, and Asp312. Positions 337, 366, 367, and 388 each coordinate (2R)-2-phosphoglycerate. Catalysis depends on Lys337, which acts as the Proton acceptor.

The protein belongs to the enolase family. The cofactor is Mg(2+).

The protein resides in the cytoplasm. Its subcellular location is the secreted. The protein localises to the cell surface. The catalysed reaction is (2R)-2-phosphoglycerate = phosphoenolpyruvate + H2O. It functions in the pathway carbohydrate degradation; glycolysis; pyruvate from D-glyceraldehyde 3-phosphate: step 4/5. Its function is as follows. Catalyzes the reversible conversion of 2-phosphoglycerate (2-PG) into phosphoenolpyruvate (PEP). It is essential for the degradation of carbohydrates via glycolysis. This is Enolase from Roseobacter denitrificans (strain ATCC 33942 / OCh 114) (Erythrobacter sp. (strain OCh 114)).